The sequence spans 133 residues: Large ribosomal subunit protein eL14 (133 aa).

The protein belongs to the eukaryotic ribosomal protein eL14 family.

This chain is Large ribosomal subunit protein eL14, found in Pisum sativum (Garden pea).